The chain runs to 175 residues: MTLNTVLSGKNIPEDIYVIIEISAHSNPIKYEVNKDLGLLFVDRFIPVPMFYPCNYGFINKTKSNDGDPLDVLVHTPYPILPGSIIRCKPIGVLNMFDESGEDYKIIAIPHPKVCLEYSSINDICHLSPTLKQQIIHFFKHYKNLENNKWVKIIGWENKKNAEKIILSACEKFHK.

Substrate contacts are provided by Lys-30, Arg-44, and Tyr-56. Residues Asp-66, Asp-71, and Asp-103 each contribute to the Mg(2+) site. Residue Tyr-142 participates in substrate binding.

The protein belongs to the PPase family. In terms of assembly, homohexamer. Mg(2+) serves as cofactor.

It localises to the cytoplasm. It carries out the reaction diphosphate + H2O = 2 phosphate + H(+). Its function is as follows. Catalyzes the hydrolysis of inorganic pyrophosphate (PPi) forming two phosphate ions. The sequence is that of Inorganic pyrophosphatase from Buchnera aphidicola subsp. Baizongia pistaciae (strain Bp).